A 287-amino-acid chain; its full sequence is uncharacterized protein (287 aa).

An ATP-grasp domain is found at 115–287 (PQNFDREWNP…NLAIELLKAI (173 aa)). ATP is bound by residues Lys-145 and 178–188 (QKYITCSKGES). Mg(2+)-binding residues include Asp-248, Glu-261, and Asn-263. Residues Asp-248, Glu-261, and Asn-263 each contribute to the Mn(2+) site.

This sequence belongs to the RimK family.

This is an uncharacterized protein from Mycoplasma genitalium (strain ATCC 33530 / DSM 19775 / NCTC 10195 / G37) (Mycoplasmoides genitalium).